The chain runs to 408 residues: Probable acyl-CoA dehydrogenase 6 (408 aa).

E265 serves as the catalytic Proton acceptor.

Belongs to the acyl-CoA dehydrogenase family. Homotetramer. It depends on FAD as a cofactor.

The catalysed reaction is 3-methylbutanoyl-CoA + oxidized [electron-transfer flavoprotein] + H(+) = 3-methylbut-2-enoyl-CoA + reduced [electron-transfer flavoprotein]. Its pathway is amino-acid degradation; L-leucine degradation; (S)-3-hydroxy-3-methylglutaryl-CoA from 3-isovaleryl-CoA: step 1/3. The polypeptide is Probable acyl-CoA dehydrogenase 6 (acdh-6) (Caenorhabditis elegans).